The following is a 79-amino-acid chain: uncharacterized protein (79 aa).

Positions 10 to 60 constitute a SpoVT-AbrB domain; it reads EAVLTMDSKGQILLPKELRERAGLKAGDRLVAIAGCDENEEVCCLILVKAE.

This is an uncharacterized protein from Archaeoglobus fulgidus (strain ATCC 49558 / DSM 4304 / JCM 9628 / NBRC 100126 / VC-16).